The sequence spans 374 residues: Severin (374 aa).

Gelsolin-like repeat units lie at residues 58–109 (FTLE…DEYG), 180–220 (EGKT…KCSA), and 278–369 (EVIK…SFLK).

This sequence belongs to the villin/gelsolin family.

Functionally, severin blocks the ends of F-actin and causes the fragmentation and depolymerization of actin filaments. This severin binds stably with actin both in a Ca(2+) dependent and a Ca(2+) independent manner. The sequence is that of Severin (AG8) from Echinococcus granulosus (Hydatid tapeworm).